The chain runs to 122 residues: uncharacterized protein (122 aa).

This is an uncharacterized protein from Schizosaccharomyces pombe (strain 972 / ATCC 24843) (Fission yeast).